Reading from the N-terminus, the 266-residue chain is Tryptophan synthase alpha chain (266 aa).

Residues E51 and D62 each act as proton acceptor in the active site.

It belongs to the TrpA family. Tetramer of two alpha and two beta chains.

The catalysed reaction is (1S,2R)-1-C-(indol-3-yl)glycerol 3-phosphate + L-serine = D-glyceraldehyde 3-phosphate + L-tryptophan + H2O. Its pathway is amino-acid biosynthesis; L-tryptophan biosynthesis; L-tryptophan from chorismate: step 5/5. Functionally, the alpha subunit is responsible for the aldol cleavage of indoleglycerol phosphate to indole and glyceraldehyde 3-phosphate. This Prochlorococcus marinus (strain NATL1A) protein is Tryptophan synthase alpha chain.